The following is a 284-amino-acid chain: MFIISSKNMLQKAQHAGYAVPAFNIHNLETLQVVVETAAEMRSPLIVAGTPGTFSYAGMGNIVAIAGDLAREYNLPLAIHLDHHESLADIESKVMAGIRSVMIDGSHFPFEENVALVKSVVDFCHRYDTSVEAELGRLGGIEDDLVVDSKDALYTNPQQAREFVARTGIDSLAVAIGTAHCMYAAEPKLDFERLAEIRALVDIPLVLHGASGLPESDIRQAISLGVCKVNVATELKIAFSDALKEYFLQNPKANDPRHYMQPAKQAMKEVVRKVIHVCGCEGQL.

The active-site Proton donor is the Asp-82. His-83 and His-180 together coordinate Zn(2+). A dihydroxyacetone phosphate-binding site is contributed by Cys-181. His-208 contacts Zn(2+). Dihydroxyacetone phosphate-binding positions include 209–211 and 230–233; these read GAS and NVAT.

The protein belongs to the class II fructose-bisphosphate aldolase family. TagBP aldolase GatY subfamily. Forms a complex with GatZ. Zn(2+) serves as cofactor.

The enzyme catalyses D-tagatofuranose 1,6-bisphosphate = D-glyceraldehyde 3-phosphate + dihydroxyacetone phosphate. It functions in the pathway carbohydrate metabolism; D-tagatose 6-phosphate degradation; D-glyceraldehyde 3-phosphate and glycerone phosphate from D-tagatose 6-phosphate: step 2/2. Functionally, catalytic subunit of the tagatose-1,6-bisphosphate aldolase GatYZ, which catalyzes the reversible aldol condensation of dihydroxyacetone phosphate (DHAP or glycerone-phosphate) with glyceraldehyde 3-phosphate (G3P) to produce tagatose 1,6-bisphosphate (TBP). Requires GatZ subunit for full activity and stability. Is involved in the catabolism of galactitol. This Salmonella paratyphi A (strain ATCC 9150 / SARB42) protein is D-tagatose-1,6-bisphosphate aldolase subunit GatY.